The sequence spans 376 residues: Putative F-box protein At3g18330 (376 aa).

Residues 1–46 (MPMPNLPKELVEEILSFVPATYLKRLSATCKPWNRLIHNDKRFARK) enclose the F-box domain.

This Arabidopsis thaliana (Mouse-ear cress) protein is Putative F-box protein At3g18330.